The following is a 160-amino-acid chain: Small ribosomal subunit protein uS17m (160 aa).

This sequence belongs to the universal ribosomal protein uS17 family. Component of the mitochondrial ribosome small subunit (28S) which comprises a 12S rRNA and about 30 distinct proteins.

It localises to the mitochondrion. The sequence is that of Small ribosomal subunit protein uS17m (mrps-17) from Caenorhabditis elegans.